The sequence spans 104 residues: Large ribosomal subunit protein uL24 (104 aa).

It belongs to the universal ribosomal protein uL24 family. In terms of assembly, part of the 50S ribosomal subunit.

Its function is as follows. One of two assembly initiator proteins, it binds directly to the 5'-end of the 23S rRNA, where it nucleates assembly of the 50S subunit. In terms of biological role, one of the proteins that surrounds the polypeptide exit tunnel on the outside of the subunit. The chain is Large ribosomal subunit protein uL24 from Rhodopseudomonas palustris (strain BisB18).